Reading from the N-terminus, the 138-residue chain is Nucleoside diphosphate kinase (138 aa).

ATP contacts are provided by lysine 9, phenylalanine 57, arginine 85, threonine 91, arginine 102, and asparagine 112. The Pros-phosphohistidine intermediate role is filled by histidine 115.

This sequence belongs to the NDK family. In terms of assembly, homotetramer. Requires Mg(2+) as cofactor.

It localises to the cytoplasm. It catalyses the reaction a 2'-deoxyribonucleoside 5'-diphosphate + ATP = a 2'-deoxyribonucleoside 5'-triphosphate + ADP. The enzyme catalyses a ribonucleoside 5'-diphosphate + ATP = a ribonucleoside 5'-triphosphate + ADP. Major role in the synthesis of nucleoside triphosphates other than ATP. The ATP gamma phosphate is transferred to the NDP beta phosphate via a ping-pong mechanism, using a phosphorylated active-site intermediate. This Trichlorobacter lovleyi (strain ATCC BAA-1151 / DSM 17278 / SZ) (Geobacter lovleyi) protein is Nucleoside diphosphate kinase.